The following is a 143-amino-acid chain: D-aminoacyl-tRNA deacylase (143 aa).

The short motif at 135–136 (GP) is the Gly-cisPro motif, important for rejection of L-amino acids element.

It belongs to the DTD family. In terms of assembly, homodimer.

It localises to the cytoplasm. The catalysed reaction is glycyl-tRNA(Ala) + H2O = tRNA(Ala) + glycine + H(+). It carries out the reaction a D-aminoacyl-tRNA + H2O = a tRNA + a D-alpha-amino acid + H(+). Functionally, an aminoacyl-tRNA editing enzyme that deacylates mischarged D-aminoacyl-tRNAs. Also deacylates mischarged glycyl-tRNA(Ala), protecting cells against glycine mischarging by AlaRS. Acts via tRNA-based rather than protein-based catalysis; rejects L-amino acids rather than detecting D-amino acids in the active site. By recycling D-aminoacyl-tRNA to D-amino acids and free tRNA molecules, this enzyme counteracts the toxicity associated with the formation of D-aminoacyl-tRNA entities in vivo and helps enforce protein L-homochirality. This chain is D-aminoacyl-tRNA deacylase, found in Mycolicibacterium paratuberculosis (strain ATCC BAA-968 / K-10) (Mycobacterium paratuberculosis).